The sequence spans 73 residues: Large ribosomal subunit protein bL28 (73 aa).

It belongs to the bacterial ribosomal protein bL28 family.

In Anaeromyxobacter dehalogenans (strain 2CP-1 / ATCC BAA-258), this protein is Large ribosomal subunit protein bL28.